The following is a 145-amino-acid chain: Peptide methionine sulfoxide reductase MsrB (145 aa).

The MsrB domain occupies 6–129 (KNERLKQLTD…NSAALRFIPV (124 aa)). C118 serves as the catalytic Nucleophile.

Belongs to the MsrB Met sulfoxide reductase family.

It carries out the reaction L-methionyl-[protein] + [thioredoxin]-disulfide + H2O = L-methionyl-(R)-S-oxide-[protein] + [thioredoxin]-dithiol. In Listeria welshimeri serovar 6b (strain ATCC 35897 / DSM 20650 / CCUG 15529 / CIP 8149 / NCTC 11857 / SLCC 5334 / V8), this protein is Peptide methionine sulfoxide reductase MsrB.